The following is a 74-amino-acid chain: Protein SlyX homolog (74 aa).

Belongs to the SlyX family.

In Aliivibrio fischeri (strain ATCC 700601 / ES114) (Vibrio fischeri), this protein is Protein SlyX homolog.